A 378-amino-acid polypeptide reads, in one-letter code: Chaperone protein DnaJ (378 aa).

In terms of domain architecture, J spans 5 to 70; it reads DYYEVLSVSR…DKKAAYDQFG (66 aa). The segment at 133–211 adopts a CR-type zinc-finger fold; that stretch reads GLTKELRIPT…CHGEGRVEKS (79 aa). Cys146, Cys149, Cys163, Cys166, Cys185, Cys188, Cys199, and Cys202 together coordinate Zn(2+). CXXCXGXG motif repeat units lie at residues 146-153, 163-170, 185-192, and 199-206; these read CDSCDGSG, CGTCHGQG, CPTCHGRG, and CNKCHGEG.

It belongs to the DnaJ family. Homodimer. Zn(2+) serves as cofactor.

The protein localises to the cytoplasm. In terms of biological role, participates actively in the response to hyperosmotic and heat shock by preventing the aggregation of stress-denatured proteins and by disaggregating proteins, also in an autonomous, DnaK-independent fashion. Unfolded proteins bind initially to DnaJ; upon interaction with the DnaJ-bound protein, DnaK hydrolyzes its bound ATP, resulting in the formation of a stable complex. GrpE releases ADP from DnaK; ATP binding to DnaK triggers the release of the substrate protein, thus completing the reaction cycle. Several rounds of ATP-dependent interactions between DnaJ, DnaK and GrpE are required for fully efficient folding. Also involved, together with DnaK and GrpE, in the DNA replication of plasmids through activation of initiation proteins. The polypeptide is Chaperone protein DnaJ (Shewanella sediminis (strain HAW-EB3)).